The chain runs to 100 residues: Small ribosomal subunit protein uS14c (100 aa).

It belongs to the universal ribosomal protein uS14 family. Part of the 30S ribosomal subunit.

Its subcellular location is the plastid. The protein localises to the chloroplast. Binds 16S rRNA, required for the assembly of 30S particles. The polypeptide is Small ribosomal subunit protein uS14c (Chlorokybus atmophyticus (Soil alga)).